Reading from the N-terminus, the 121-residue chain is Large ribosomal subunit protein bL19 (121 aa).

This sequence belongs to the bacterial ribosomal protein bL19 family.

This protein is located at the 30S-50S ribosomal subunit interface and may play a role in the structure and function of the aminoacyl-tRNA binding site. This is Large ribosomal subunit protein bL19 (rplS) from Borreliella burgdorferi (strain ATCC 35210 / DSM 4680 / CIP 102532 / B31) (Borrelia burgdorferi).